We begin with the raw amino-acid sequence, 91 residues long: Small ribosomal subunit protein uS19 (91 aa).

It belongs to the universal ribosomal protein uS19 family.

Protein S19 forms a complex with S13 that binds strongly to the 16S ribosomal RNA. In Actinobacillus pleuropneumoniae serotype 7 (strain AP76), this protein is Small ribosomal subunit protein uS19.